We begin with the raw amino-acid sequence, 423 residues long: Major royal jelly protein 9 (423 aa).

An N-terminal signal peptide occupies residues 1 to 20; sequence MSFNIWWLILYFSIVCQAKA. 5 N-linked (GlcNAc...) asparagine glycosylation sites follow: Asn-110, Asn-118, Asn-177, Asn-196, and Asn-345.

It belongs to the major royal jelly protein family. As to expression, expressed at very low levels in the hypopharyngeal glands of adult worker bees (at protein level); expression peaks at 12 days post eclosion. Secreted into bee venom in the sting apparatus (at protein level). Expressed in the brains of adult worker bees peaking at 12 days post eclosion (at protein level). Expressed in the spermatheca of adult queen bees (at protein level); expression levels are higher in mated queens than in virgin queens. Along with Mrjp8 expressed at very low levels in the head of worker bees compared to other major royal jelly proteins.

Its subcellular location is the secreted. Its function is as follows. Component of bee sting venom. Component of royal jelly, a substance produced in the hypopharyngeal gland containing proteins, free amino acids, fatty acids, sugars and other nutrients, which is fed to developing larvae by worker nurse bees; may be present only at trace levels. All larvae are fed some royal jelly (also known as worker jelly) early in their development but it forms the principal source of nutrition for larvae destined to become queen bees. Produced in the spermatheca of adult queen bees, along with other major royal jelly proteins, where it may act as a nutrient supply for sperm stored by mated queens, or be involved in energy metabolism. The sequence is that of Major royal jelly protein 9 from Apis mellifera (Honeybee).